A 271-amino-acid polypeptide reads, in one-letter code: Ribosomal RNA small subunit methyltransferase A (271 aa).

Residues His11, Leu13, Gly38, Glu58, Asp86, and Asn101 each coordinate S-adenosyl-L-methionine.

The protein belongs to the class I-like SAM-binding methyltransferase superfamily. rRNA adenine N(6)-methyltransferase family. RsmA subfamily.

It localises to the cytoplasm. The catalysed reaction is adenosine(1518)/adenosine(1519) in 16S rRNA + 4 S-adenosyl-L-methionine = N(6)-dimethyladenosine(1518)/N(6)-dimethyladenosine(1519) in 16S rRNA + 4 S-adenosyl-L-homocysteine + 4 H(+). Functionally, specifically dimethylates two adjacent adenosines (A1518 and A1519) in the loop of a conserved hairpin near the 3'-end of 16S rRNA in the 30S particle. May play a critical role in biogenesis of 30S subunits. The chain is Ribosomal RNA small subunit methyltransferase A from Helicobacter pylori (strain J99 / ATCC 700824) (Campylobacter pylori J99).